We begin with the raw amino-acid sequence, 123 residues long: Ribosome-binding factor A (123 aa).

The protein belongs to the RbfA family. In terms of assembly, monomer. Binds 30S ribosomal subunits, but not 50S ribosomal subunits or 70S ribosomes.

It is found in the cytoplasm. Functionally, one of several proteins that assist in the late maturation steps of the functional core of the 30S ribosomal subunit. Associates with free 30S ribosomal subunits (but not with 30S subunits that are part of 70S ribosomes or polysomes). Required for efficient processing of 16S rRNA. May interact with the 5'-terminal helix region of 16S rRNA. The protein is Ribosome-binding factor A of Koribacter versatilis (strain Ellin345).